A 518-amino-acid polypeptide reads, in one-letter code: Glutamate--cysteine ligase (518 aa).

The protein belongs to the glutamate--cysteine ligase type 1 family. Type 1 subfamily.

The enzyme catalyses L-cysteine + L-glutamate + ATP = gamma-L-glutamyl-L-cysteine + ADP + phosphate + H(+). It participates in sulfur metabolism; glutathione biosynthesis; glutathione from L-cysteine and L-glutamate: step 1/2. The sequence is that of Glutamate--cysteine ligase from Escherichia coli O8 (strain IAI1).